Consider the following 393-residue polypeptide: Riboflavin biosynthesis protein RibBA (393 aa).

The interval 1-200 is DHBP synthase; it reads MQLDSIDTAL…IEDLEKYRKS (200 aa). D-ribulose 5-phosphate-binding positions include 27–28, D32, 139–143, and E163; these read RE and RRGHT. E28 serves as a coordination point for Mg(2+). H142 is a binding site for Mg(2+). The segment at 201 to 393 is GTP cyclohydrolase II; the sequence is SISKLDAKAK…TKKEKMGHLI (193 aa). Residue 249 to 253 participates in GTP binding; sequence RIHSA. C254, C265, and C267 together coordinate Zn(2+). GTP is bound by residues Q270, 291 to 293, and T313; that span reads EGR. The active-site Proton acceptor; for GTP cyclohydrolase activity is D325. The Nucleophile; for GTP cyclohydrolase activity role is filled by R327. GTP contacts are provided by S348 and K353.

It in the N-terminal section; belongs to the DHBP synthase family. The protein in the C-terminal section; belongs to the GTP cyclohydrolase II family. Requires Mg(2+) as cofactor. Mn(2+) serves as cofactor. Zn(2+) is required as a cofactor.

The catalysed reaction is D-ribulose 5-phosphate = (2S)-2-hydroxy-3-oxobutyl phosphate + formate + H(+). It carries out the reaction GTP + 4 H2O = 2,5-diamino-6-hydroxy-4-(5-phosphoribosylamino)-pyrimidine + formate + 2 phosphate + 3 H(+). It functions in the pathway cofactor biosynthesis; riboflavin biosynthesis; 2-hydroxy-3-oxobutyl phosphate from D-ribulose 5-phosphate: step 1/1. The protein operates within cofactor biosynthesis; riboflavin biosynthesis; 5-amino-6-(D-ribitylamino)uracil from GTP: step 1/4. In terms of biological role, catalyzes the conversion of D-ribulose 5-phosphate to formate and 3,4-dihydroxy-2-butanone 4-phosphate. Its function is as follows. Catalyzes the conversion of GTP to 2,5-diamino-6-ribosylamino-4(3H)-pyrimidinone 5'-phosphate (DARP), formate and pyrophosphate. This is Riboflavin biosynthesis protein RibBA from Staphylococcus saprophyticus subsp. saprophyticus (strain ATCC 15305 / DSM 20229 / NCIMB 8711 / NCTC 7292 / S-41).